The primary structure comprises 217 residues: E3 ubiquitin-protein ligase znrf2 (217 aa).

2 disordered regions span residues 1–27 (MGAKQSSPAANGRTRAYSGSDLPSATA) and 63–111 (QFIS…ERST). A lipid anchor (N-myristoyl glycine) is attached at Gly-2. Positions 68-100 (RTRSVGPSARPQSGINIPNSGAYSSADSGNSTP) are enriched in polar residues. The RING-type; atypical zinc finger occupies 174 to 215 (CAICLEELLQGDTIARLPCLCIYHKGCIDEWFEVNRSCPEHP).

Its subcellular location is the endosome membrane. The protein resides in the lysosome membrane. The protein localises to the presynaptic cell membrane. It carries out the reaction S-ubiquitinyl-[E2 ubiquitin-conjugating enzyme]-L-cysteine + [acceptor protein]-L-lysine = [E2 ubiquitin-conjugating enzyme]-L-cysteine + N(6)-ubiquitinyl-[acceptor protein]-L-lysine.. The protein operates within protein modification; protein ubiquitination. May play a role in the establishment and maintenance of neuronal transmission and plasticity via its ubiquitin ligase activity. E3 ubiquitin ligases accept ubiquitin from an E2 ubiquitin-conjugating enzyme in the form of a thioester and then directly transfer the ubiquitin to targeted substrates. This is E3 ubiquitin-protein ligase znrf2 (znrf2) from Danio rerio (Zebrafish).